A 633-amino-acid chain; its full sequence is Extracellular metalloproteinase mep (633 aa).

The first 18 residues, 1 to 18, serve as a signal peptide directing secretion; sequence MRLLSLAGAMALPLCVLA. A propeptide spanning residues 19-244 is cleaved from the precursor; the sequence is HPTHRTRGIA…IHGVVDYISD (226 aa). An N-linked (GlcNAc...) asparagine glycan is attached at Asn-326. Residue His-428 participates in Zn(2+) binding. The active site involves Glu-429. His-432 lines the Zn(2+) pocket. Asn-514 carries an N-linked (GlcNAc...) asparagine glycan.

It belongs to the peptidase M36 family. The cofactor is Zn(2+).

The protein localises to the secreted. Its function is as follows. Secreted metalloproteinase that allows assimilation of proteinaceous substrates. In Aspergillus terreus (strain NIH 2624 / FGSC A1156), this protein is Extracellular metalloproteinase mep (mep).